A 592-amino-acid chain; its full sequence is Hepatocyte nuclear factor 1-alpha-B (592 aa).

The dimerization stretch occupies residues 1 to 31 (MASQLSYLQQELLRALLESGVTKEALKKALA). Residues 1-32 (MASQLSYLQQELLRALLESGVTKEALKKALAD) form the HNF-p1 domain. The disordered stretch occupies residues 54–78 (NCVQLPNGLGEPQMSEDESSDDGGD). Positions 67-77 (MSEDESSDDGG) are enriched in acidic residues. The POU-specific atypical domain maps to 85–180 (KELERLSPEE…IARQFTHAGH (96 aa)). Interaction with DNA regions lie at residues 128–130 (QRE), 141–147 (HLSQHLN), 153–156 (KTQK), 201–204 (RFKW), 261–263 (RVY), and 268–271 (NSGK). The Nuclear localization signal signature appears at 195 to 203 (KKMRRNRFK). A DNA-binding region (homeobox; HNF1-type) is located at residues 197–277 (MRRNRFKWGP…NSGKEEAFRH (81 aa)). 2 stretches are compositionally biased toward polar residues: residues 284-295 (YNGQQSSAQPLS) and 306-328 (RYTQDSSTDRSAAMANSQSTLSP). Disordered regions lie at residues 284 to 329 (YNGQ…LSPS) and 511 to 533 (KQVVSHHPTAHGDSPGSQLHNQD).

Belongs to the HNF1 homeobox family. Binds DNA as dimer. Forms a homodimer or heterodimer with HNF1-alpha-A. Potentially also form a heterodimer with HNF1-beta. In terms of tissue distribution, liver.

It is found in the nucleus. In terms of biological role, transcriptional activator that regulates the tissue specific expression of multiple genes, especially in pancreas and liver. Binds to the hepatocyte specific promoter element HP1. Binds to the inverted palindrome 5'-GTTAATNATTAAC-3'. The sequence is that of Hepatocyte nuclear factor 1-alpha-B (hnf1a-b) from Xenopus laevis (African clawed frog).